We begin with the raw amino-acid sequence, 417 residues long: D-amino acid dehydrogenase (417 aa).

Ile3–Tyr17 is a binding site for FAD.

This sequence belongs to the DadA oxidoreductase family. The cofactor is FAD.

It catalyses the reaction a D-alpha-amino acid + A + H2O = a 2-oxocarboxylate + AH2 + NH4(+). Its pathway is amino-acid degradation; D-alanine degradation; NH(3) and pyruvate from D-alanine: step 1/1. Oxidative deamination of D-amino acids. This is D-amino acid dehydrogenase from Azorhizobium caulinodans (strain ATCC 43989 / DSM 5975 / JCM 20966 / LMG 6465 / NBRC 14845 / NCIMB 13405 / ORS 571).